Here is a 258-residue protein sequence, read N- to C-terminus: Casein kinase II subunit beta' (258 aa).

Residues 1-10 (MGSRSENVGT) are compositionally biased toward polar residues. Residues 1–29 (MGSRSENVGTVTREGSRVEQDDVLMDDDS) are disordered.

The protein belongs to the casein kinase 2 subunit beta family. In terms of assembly, tetramer composed of an alpha subunit, an alpha' subunit, one beta subunit and one beta' subunit. Interacts with FACT subunits POB3 and SPT16. Interaction with YTA7. Phosphorylated by alpha subunit. In terms of processing, the N-terminus is blocked.

Its function is as follows. Regulatory subunit of casein kinase II/CK2. As part of the kinase complex regulates the basal catalytic activity of the alpha subunit a constitutively active serine/threonine-protein kinase that phosphorylates a large number of substrates containing acidic residues C-terminal to the phosphorylated serine or threonine. This Saccharomyces cerevisiae (strain ATCC 204508 / S288c) (Baker's yeast) protein is Casein kinase II subunit beta'.